A 376-amino-acid polypeptide reads, in one-letter code: Glucose-1-phosphate adenylyltransferase (376 aa).

Alpha-D-glucose 1-phosphate-binding positions include Tyr101, Gly166, 181–182, and Ser192; that span reads EK.

It belongs to the bacterial/plant glucose-1-phosphate adenylyltransferase family. As to quaternary structure, homotetramer.

It catalyses the reaction alpha-D-glucose 1-phosphate + ATP + H(+) = ADP-alpha-D-glucose + diphosphate. It functions in the pathway glycan biosynthesis; glycogen biosynthesis. Its function is as follows. Involved in the biosynthesis of ADP-glucose, a building block required for the elongation reactions to produce glycogen. Catalyzes the reaction between ATP and alpha-D-glucose 1-phosphate (G1P) to produce pyrophosphate and ADP-Glc. The sequence is that of Glucose-1-phosphate adenylyltransferase from Bacillus cereus (strain ATCC 14579 / DSM 31 / CCUG 7414 / JCM 2152 / NBRC 15305 / NCIMB 9373 / NCTC 2599 / NRRL B-3711).